The following is a 953-amino-acid chain: Isoleucine--tRNA ligase (953 aa).

A 'HIGH' region motif is present at residues 57 to 67 (PYANGDIHIGH). Position 582 (Glu582) interacts with L-isoleucyl-5'-AMP. The short motif at 623-627 (KMSKS) is the 'KMSKS' region element. Lys626 provides a ligand contact to ATP. Cys916, Cys919, Cys936, and Cys939 together coordinate Zn(2+).

The protein belongs to the class-I aminoacyl-tRNA synthetase family. IleS type 1 subfamily. As to quaternary structure, monomer. The cofactor is Zn(2+).

It localises to the cytoplasm. It carries out the reaction tRNA(Ile) + L-isoleucine + ATP = L-isoleucyl-tRNA(Ile) + AMP + diphosphate. In terms of biological role, catalyzes the attachment of isoleucine to tRNA(Ile). As IleRS can inadvertently accommodate and process structurally similar amino acids such as valine, to avoid such errors it has two additional distinct tRNA(Ile)-dependent editing activities. One activity is designated as 'pretransfer' editing and involves the hydrolysis of activated Val-AMP. The other activity is designated 'posttransfer' editing and involves deacylation of mischarged Val-tRNA(Ile). The polypeptide is Isoleucine--tRNA ligase (Bordetella pertussis (strain Tohama I / ATCC BAA-589 / NCTC 13251)).